The sequence spans 185 residues: Ribosome-recycling factor (185 aa).

The protein belongs to the RRF family.

It is found in the cytoplasm. In terms of biological role, responsible for the release of ribosomes from messenger RNA at the termination of protein biosynthesis. May increase the efficiency of translation by recycling ribosomes from one round of translation to another. This Halothermothrix orenii (strain H 168 / OCM 544 / DSM 9562) protein is Ribosome-recycling factor.